The following is a 1363-amino-acid chain: DNA-directed RNA polymerase subunit beta (1363 aa).

It belongs to the RNA polymerase beta chain family. The RNAP catalytic core consists of 2 alpha, 1 beta, 1 beta' and 1 omega subunit. When a sigma factor is associated with the core the holoenzyme is formed, which can initiate transcription.

The catalysed reaction is RNA(n) + a ribonucleoside 5'-triphosphate = RNA(n+1) + diphosphate. In terms of biological role, DNA-dependent RNA polymerase catalyzes the transcription of DNA into RNA using the four ribonucleoside triphosphates as substrates. The protein is DNA-directed RNA polymerase subunit beta of Pelagibacter ubique (strain HTCC1062).